The following is a 107-amino-acid chain: Nucleoid-associated protein Mlg_1509 (107 aa).

The protein belongs to the YbaB/EbfC family. In terms of assembly, homodimer.

It localises to the cytoplasm. The protein resides in the nucleoid. In terms of biological role, binds to DNA and alters its conformation. May be involved in regulation of gene expression, nucleoid organization and DNA protection. In Alkalilimnicola ehrlichii (strain ATCC BAA-1101 / DSM 17681 / MLHE-1), this protein is Nucleoid-associated protein Mlg_1509.